The sequence spans 339 residues: MO25-like protein 3 (339 aa).

It belongs to the Mo25 family.

The chain is MO25-like protein 3 (mop-25.3) from Caenorhabditis elegans.